Reading from the N-terminus, the 38-residue chain is Potassium channel toxin alpha-KTx 3.11 (38 aa).

3 disulfide bridges follow: Cys8–Cys28, Cys14–Cys33, and Cys18–Cys35.

Belongs to the short scorpion toxin superfamily. Potassium channel inhibitor family. Alpha-KTx 03 subfamily. In terms of tissue distribution, expressed by the venom gland.

The protein resides in the secreted. Its function is as follows. Blocks the voltage-gated potassium channel Kv1.3/KCNA3 (IC(50)=7.2 nM). Correnti and colleagues have also shown that this toxin inhibits Kv1.1/KCNA1, which is different from Abdel-Mottaleb and colleagues conclusions. The protein is Potassium channel toxin alpha-KTx 3.11 of Odontobuthus doriae (Yellow Iranian scorpion).